The primary structure comprises 354 residues: Caffeate O-methyltransferase-like protein 2 (354 aa).

Residues Gly-198, Asp-221, Met-242, and Lys-255 each coordinate S-adenosyl-L-homocysteine. His-259 (proton acceptor) is an active-site residue. Active-site residues include Glu-287 and Glu-319.

Belongs to the class I-like SAM-binding methyltransferase superfamily. Cation-independent O-methyltransferase family. COMT subfamily.

The protein is Caffeate O-methyltransferase-like protein 2 of Oryza sativa subsp. japonica (Rice).